Here is a 155-residue protein sequence, read N- to C-terminus: Regulatory protein RecX (155 aa).

This sequence belongs to the RecX family.

Its subcellular location is the cytoplasm. In terms of biological role, modulates RecA activity. This Pseudomonas entomophila (strain L48) protein is Regulatory protein RecX.